A 204-amino-acid polypeptide reads, in one-letter code: Urease accessory protein UreG 1 (204 aa).

14 to 21 (GPVGSGKT) lines the GTP pocket.

It belongs to the SIMIBI class G3E GTPase family. UreG subfamily. In terms of assembly, homodimer. UreD, UreF and UreG form a complex that acts as a GTP-hydrolysis-dependent molecular chaperone, activating the urease apoprotein by helping to assemble the nickel containing metallocenter of UreC. The UreE protein probably delivers the nickel.

It localises to the cytoplasm. Facilitates the functional incorporation of the urease nickel metallocenter. This process requires GTP hydrolysis, probably effectuated by UreG. In Methylorubrum extorquens (strain PA1) (Methylobacterium extorquens), this protein is Urease accessory protein UreG 1.